The chain runs to 652 residues: DNA ligase (652 aa).

NAD(+)-binding positions include 29–33 (DSDYD), 78–79 (SL), and Glu107. Lys109 functions as the N6-AMP-lysine intermediate in the catalytic mechanism. NAD(+)-binding residues include Arg130, Glu164, Lys278, and Lys302. Zn(2+) contacts are provided by Cys395, Cys398, Cys413, and Cys418. Positions 577–652 (NSDAALFGLT…IEDEDWLRQL (76 aa)) constitute a BRCT domain.

Belongs to the NAD-dependent DNA ligase family. LigA subfamily. Mg(2+) is required as a cofactor. It depends on Mn(2+) as a cofactor.

It carries out the reaction NAD(+) + (deoxyribonucleotide)n-3'-hydroxyl + 5'-phospho-(deoxyribonucleotide)m = (deoxyribonucleotide)n+m + AMP + beta-nicotinamide D-nucleotide.. Its function is as follows. DNA ligase that catalyzes the formation of phosphodiester linkages between 5'-phosphoryl and 3'-hydroxyl groups in double-stranded DNA using NAD as a coenzyme and as the energy source for the reaction. It is essential for DNA replication and repair of damaged DNA. The protein is DNA ligase of Streptococcus pyogenes serotype M1.